Here is a 496-residue protein sequence, read N- to C-terminus: NADH-quinone oxidoreductase subunit N (496 aa).

13 consecutive transmembrane segments (helical) span residues 16 to 36, 46 to 66, 79 to 99, 116 to 136, 166 to 186, 208 to 228, 245 to 267, 278 to 298, 304 to 324, 331 to 351, 382 to 402, 422 to 442, and 464 to 484; these read SLSP…VGAI, CVFC…FNGL, ISII…PLAL, FLFM…LIIF, FAMG…FYLA, LIIL…LSLI, LAGY…IFAM, DMLY…ALVQ, MLAF…VANS, LFFY…MLWV, AVIM…SVFW, IIMI…VFMF, and VIVG…GAIL.

Belongs to the complex I subunit 2 family. NDH-1 is composed of 14 different subunits. Subunits NuoA, H, J, K, L, M, N constitute the membrane sector of the complex.

The protein resides in the cell inner membrane. It catalyses the reaction a quinone + NADH + 5 H(+)(in) = a quinol + NAD(+) + 4 H(+)(out). Its function is as follows. NDH-1 shuttles electrons from NADH, via FMN and iron-sulfur (Fe-S) centers, to quinones in the respiratory chain. The immediate electron acceptor for the enzyme in this species is believed to be ubiquinone. Couples the redox reaction to proton translocation (for every two electrons transferred, four hydrogen ions are translocated across the cytoplasmic membrane), and thus conserves the redox energy in a proton gradient. In Campylobacter concisus (strain 13826), this protein is NADH-quinone oxidoreductase subunit N.